Here is a 668-residue protein sequence, read N- to C-terminus: tRNA 5-methylaminomethyl-2-thiouridine biosynthesis bifunctional protein MnmC (668 aa).

The tRNA (mnm(5)s(2)U34)-methyltransferase stretch occupies residues 1–245 (MKHYSIQPAN…KREMLCGVME (245 aa)). Residues 270–668 (IGGGIASALL…LLKGKAVKAG (399 aa)) form an FAD-dependent cmnm(5)s(2)U34 oxidoreductase region.

The protein in the N-terminal section; belongs to the methyltransferase superfamily. tRNA (mnm(5)s(2)U34)-methyltransferase family. It in the C-terminal section; belongs to the DAO family. FAD is required as a cofactor.

It localises to the cytoplasm. The enzyme catalyses 5-aminomethyl-2-thiouridine(34) in tRNA + S-adenosyl-L-methionine = 5-methylaminomethyl-2-thiouridine(34) in tRNA + S-adenosyl-L-homocysteine + H(+). Functionally, catalyzes the last two steps in the biosynthesis of 5-methylaminomethyl-2-thiouridine (mnm(5)s(2)U) at the wobble position (U34) in tRNA. Catalyzes the FAD-dependent demodification of cmnm(5)s(2)U34 to nm(5)s(2)U34, followed by the transfer of a methyl group from S-adenosyl-L-methionine to nm(5)s(2)U34, to form mnm(5)s(2)U34. The protein is tRNA 5-methylaminomethyl-2-thiouridine biosynthesis bifunctional protein MnmC of Escherichia coli (strain UTI89 / UPEC).